The following is a 294-amino-acid chain: Probable metallo-hydrolase BURPS1710b_2304 (294 aa).

A divalent metal cation contacts are provided by histidine 68, histidine 70, aspartate 72, histidine 73, histidine 143, aspartate 170, and histidine 212.

This sequence belongs to the metallo-beta-lactamase superfamily. The cofactor is a divalent metal cation.

Probable hydrolase. Does not have beta-lactamase activity. The sequence is that of Probable metallo-hydrolase BURPS1710b_2304 from Burkholderia pseudomallei (strain 1710b).